The following is a 134-amino-acid chain: Interleukin-5 (134 aa).

Positions Met1–Ala19 are cleaved as a signal peptide. Thr22 carries an O-linked (GalNAc...) threonine glycan. An N-linked (GlcNAc...) asparagine glycan is attached at Asn47.

Belongs to the IL-5 family. As to quaternary structure, homodimer; disulfide-linked. Interacts with IL5RA. Interacts with CSF2RB. Present in peripheral blood mononuclear cells.

It is found in the secreted. Homodimeric cytokine expressed predominantly by T-lymphocytes and NK cells that plays an important role in the survival, differentiation, and chemotaxis of eosinophils. Also acts on activated and resting B-cells to induce immunoglobulin production, growth, and differentiation. Mechanistically, exerts its biological effects through a receptor composed of IL5RA subunit and the cytokine receptor common subunit beta/CSF2RB. Binding to the receptor leads to activation of various kinases including LYN, SYK and JAK2 and thereby propagates signals through the RAS-MAPK and JAK-STAT5 pathways respectively. This chain is Interleukin-5 (IL5), found in Homo sapiens (Human).